A 131-amino-acid polypeptide reads, in one-letter code: Lysosomal enzyme trafficking factor (131 aa).

The next 2 membrane-spanning stretches (helical) occupy residues 8–28 (MGWIGVSLYLFVSAAAFYYVF) and 66–86 (LPFWLWATLFLIPYFQVFLFL).

Belongs to the LYSET family.

It is found in the golgi apparatus membrane. Its function is as follows. Required for mannose-6-phosphate-dependent trafficking of lysosomal enzymes. LYSET bridges GlcNAc-1-phosphate transferase (GNPTAB), to the membrane-bound transcription factor site-1 protease (MBTPS1), thus allowing proteolytic activation of the GNPTAB. GNPTAB is involved in the regulation of M6P-dependent Golgi-to-lysosome trafficking of lysosomal enzymes. LYSET is thus an essential factor for maturation and delivery of lysosomal hydrolases. This Xenopus laevis (African clawed frog) protein is Lysosomal enzyme trafficking factor (lyset-a).